We begin with the raw amino-acid sequence, 150 residues long: UPF0098 protein TC_0109 (150 aa).

It belongs to the UPF0098 family.

The protein is UPF0098 protein TC_0109 of Chlamydia muridarum (strain MoPn / Nigg).